Reading from the N-terminus, the 570-residue chain is MFS-type transporter ptmT (570 aa).

The segment covering 1–11 (MPDSGNIQLDT) has biased composition (polar residues). The segment at 1-34 (MPDSGNIQLDTLQHKDHSQETTSHYEGGSQLPEQ) is disordered. A run of 14 helical transmembrane segments spans residues 50 to 70 (GLIRVILITMGVALCSFCVGL), 94 to 114 (WYVSAYLLVTSAFILSFGKIY), 121 to 141 (WTYLISLGLFELGSLICAITP), 151 to 171 (AISGLGSAGLFPGSVIILSNI), 182 to 202 (AFIGIMSGIATVTGPILGGVF), 210 to 230 (WCFYINLPIGGVTAVVVFLFM), 247 to 267 (GLDWIGTAVFIPAIVSLLLAL), 278 to 298 (NVRIIMLFIIAGVLGMVWLLI), 323 to 343 (IYTIPFVGCVIVLGYYLPIWF), 356 to 376 (IMNLPTVVGTIVVGLLSSVLI), 379 to 399 (VGYMMPFLVLGSVMLAVGAGL), 413 to 433 (IGYQAMIGMGAGLGYQLPLLV), 445 to 465 (VATAVVIFMQNLAGSIFSAIA), and 517 to 537 (VTHTFYAGVAAASLSVFGAFI). The N-linked (GlcNAc...) asparagine glycan is linked to asparagine 541. Positions 550–570 (PEPLVPGGSHSGAERDSKNGT) are disordered. Basic and acidic residues predominate over residues 561-570 (GAERDSKNGT).

This sequence belongs to the major facilitator superfamily. TCR/Tet family.

It is found in the cell membrane. In terms of biological role, MFS-type transporter; part of the gene cluster that mediates the biosynthesis of the indole diterpenes penitrems. May be involved in the efflux of penitrems. The sequence is that of MFS-type transporter ptmT from Penicillium ochrochloron.